We begin with the raw amino-acid sequence, 296 residues long: Protoheme IX farnesyltransferase (296 aa).

Over 1 to 9 (MMFKQYLQV) the chain is Cytoplasmic. Residues 10–28 (TKPGIIFGNLISVIGGFLL) traverse the membrane as a helical segment. Residues 29-37 (ASKGSIDYP) lie on the Periplasmic side of the membrane. A helical transmembrane segment spans residues 38 to 56 (LFIYTLVGVSLVVASGCVF). Residues 57 to 78 (NNYIDRDIDRKMERTKNRVLVK) are Cytoplasmic-facing. Residues 79-97 (GLISPGVSLVYATLLGIAG) form a helical membrane-spanning segment. The Periplasmic portion of the chain corresponds to 98 to 107 (FMLLWFGANP). Residues 108-126 (LACWLGVMGFVVYVGVYSL) form a helical membrane-spanning segment. Topologically, residues 127–197 (YMKRHSVYGT…YQAANIPVLP (71 aa)) are cytoplasmic. Residues 198-216 (VVKGISVAKNHITLYIIAF) traverse the membrane as a helical segment. Over 217–228 (AVATLMLTLGGY) the chain is Periplasmic. The chain crosses the membrane as a helical span at residues 229 to 247 (AGYKYLVVAAAVSVWWLGM). Residues 248–268 (ALRGYKVEDDKVWARKLFGFS) are Cytoplasmic-facing. A helical transmembrane segment spans residues 269-287 (IIAITALSIMMSVDFMVPN). Residues 288 to 296 (SQNLLTYVW) are Periplasmic-facing.

Belongs to the UbiA prenyltransferase family. Protoheme IX farnesyltransferase subfamily.

It localises to the cell inner membrane. The enzyme catalyses heme b + (2E,6E)-farnesyl diphosphate + H2O = Fe(II)-heme o + diphosphate. It participates in porphyrin-containing compound metabolism; heme O biosynthesis; heme O from protoheme: step 1/1. Functionally, converts heme B (protoheme IX) to heme O by substitution of the vinyl group on carbon 2 of heme B porphyrin ring with a hydroxyethyl farnesyl side group. The sequence is that of Protoheme IX farnesyltransferase from Salmonella typhimurium (strain LT2 / SGSC1412 / ATCC 700720).